Reading from the N-terminus, the 241-residue chain is uncharacterized protein (241 aa).

This is an uncharacterized protein from Methanocaldococcus jannaschii (strain ATCC 43067 / DSM 2661 / JAL-1 / JCM 10045 / NBRC 100440) (Methanococcus jannaschii).